Here is a 447-residue protein sequence, read N- to C-terminus: Adenylosuccinate synthetase (447 aa).

Residues 12-18 and 40-42 contribute to the GTP site; these read GDEGKGK and GHT. The Proton acceptor role is filled by D13. Mg(2+)-binding residues include D13 and G40. IMP contacts are provided by residues 13–16, 38–41, T128, R142, Q223, T238, and R302; these read DEGK and NAGH. The active-site Proton donor is the H41. Substrate is bound at residue 298–304; it reads TTTGRKR. GTP contacts are provided by residues R304, 330 to 332, and 412 to 414; these read KLD and SLG.

The protein belongs to the adenylosuccinate synthetase family. Homodimer. Mg(2+) is required as a cofactor.

The protein localises to the cytoplasm. The catalysed reaction is IMP + L-aspartate + GTP = N(6)-(1,2-dicarboxyethyl)-AMP + GDP + phosphate + 2 H(+). It functions in the pathway purine metabolism; AMP biosynthesis via de novo pathway; AMP from IMP: step 1/2. In terms of biological role, plays an important role in the de novo pathway of purine nucleotide biosynthesis. Catalyzes the first committed step in the biosynthesis of AMP from IMP. This chain is Adenylosuccinate synthetase, found in Nostoc sp. (strain PCC 7120 / SAG 25.82 / UTEX 2576).